The following is a 912-amino-acid chain: WD repeat-containing protein 44 (912 aa).

Disordered regions lie at residues 206–352 (DIIE…ELTD), 399–426 (SNDA…LKQK), and 460–481 (RDEV…GMPY). Pro residues predominate over residues 236–258 (NRPPQPINAPPPRPPPPARPAPP). The span at 264–278 (GDTDFDRSSGFEYQK) shows a compositional bias: basic and acidic residues. The span at 288 to 311 (SPNTLTENMNRDSQPSLDLASATS) shows a compositional bias: polar residues. Basic and acidic residues predominate over residues 410–422 (KPQSHQSETDGGK). Over residues 469 to 478 (DDPSSSDDEG) the composition is skewed to acidic residues. The stretch at 511–550 (EHVGAVWTMKFSHCGRLLASAGQDNVVRIWVLKNAFDYFN) is one WD 1 repeat. Residues 559–594 (EGRVSPSPSQESLNSSKSDTDGGVFSGTDDVDPDDK) form a disordered region. A compositionally biased stretch (low complexity) spans 563–575 (SPSPSQESLNSSK). WD repeat units lie at residues 608–646 (GHTA…CLCC), 648–688 (QHID…VALW), 693–732 (GQTK…YHTQ), 743–782 (RVGR…LSMK), 787–826 (VNSS…SKFT), 841–880 (AHNA…ENIP), and 882–912 (GALK…KNIS). The segment at 861-882 (AETSSEKQEGDQAEPVENIPSG) is disordered.

The protein localises to the cytoplasm. It localises to the cytosol. Its subcellular location is the perinuclear region. It is found in the endosome membrane. The protein resides in the golgi apparatus. The protein localises to the trans-Golgi network. Its function is as follows. Downstream effector for rab11. May be involved in vesicle recycling. May also be involved in the inhibition of the intracellular ciliogenesis pathway. This Xenopus laevis (African clawed frog) protein is WD repeat-containing protein 44 (wdr44).